The sequence spans 130 residues: D-ribose pyranase (130 aa).

Histidine 20 acts as the Proton donor in catalysis. Residues aspartate 28, histidine 97, and 119–121 (YAN) each bind substrate.

This sequence belongs to the RbsD / FucU family. RbsD subfamily. As to quaternary structure, homodecamer.

Its subcellular location is the cytoplasm. It catalyses the reaction beta-D-ribopyranose = beta-D-ribofuranose. It participates in carbohydrate metabolism; D-ribose degradation; D-ribose 5-phosphate from beta-D-ribopyranose: step 1/2. In terms of biological role, catalyzes the interconversion of beta-pyran and beta-furan forms of D-ribose. The sequence is that of D-ribose pyranase from Paracidovorax citrulli (strain AAC00-1) (Acidovorax citrulli).